A 214-amino-acid polypeptide reads, in one-letter code: Probable GTP-binding protein EngB (214 aa).

The EngB-type G domain occupies 40-212 (SLPEIVFVGK…KASFAQCIKH (173 aa)). Residues 48–55 (GKSNVGKS), 75–79 (GRTRQ), 93–96 (DLPG), 160–163 (TKSD), and 191–193 (VSS) each bind GTP. Residues S55 and T77 each contribute to the Mg(2+) site.

It belongs to the TRAFAC class TrmE-Era-EngA-EngB-Septin-like GTPase superfamily. EngB GTPase family. It depends on Mg(2+) as a cofactor.

Functionally, necessary for normal cell division and for the maintenance of normal septation. This Rickettsia prowazekii (strain Madrid E) protein is Probable GTP-binding protein EngB.